The following is a 375-amino-acid chain: o-succinylbenzoate synthase (375 aa).

Residue Lys166 is the Proton donor of the active site. Mg(2+) contacts are provided by Asp191, Glu216, and Asp241. Lys265 acts as the Proton acceptor in catalysis.

This sequence belongs to the mandelate racemase/muconate lactonizing enzyme family. MenC type 2 subfamily. In terms of assembly, homotetramer. A divalent metal cation is required as a cofactor.

The catalysed reaction is (1R,6R)-6-hydroxy-2-succinyl-cyclohexa-2,4-diene-1-carboxylate = 2-succinylbenzoate + H2O. It carries out the reaction N-acetyl-D-methionine = N-acetyl-L-methionine. It catalyses the reaction N-acetyl-D-phenylalanine = N-acetyl-L-phenylalanine. It participates in quinol/quinone metabolism; 1,4-dihydroxy-2-naphthoate biosynthesis; 1,4-dihydroxy-2-naphthoate from chorismate: step 4/7. It functions in the pathway quinol/quinone metabolism; menaquinone biosynthesis. In terms of biological role, converts 2-succinyl-6-hydroxy-2,4-cyclohexadiene-1-carboxylate (SHCHC) to 2-succinylbenzoate (OSB). Also acts as a N-succinylamino acid racemase (NSAR) that catalyzes the racemization of various N-succinylamino acids, including N-succinyl-alanine and N-succinyl-phenylalanine. Can catalyze the racemization of a broad range of N-acylamino acids, including N-acetyl-methionine, N-acetyl-phenylalanine, N-carbamoyl-methionine, N-formyl-D-methionine, N-formyl-D-norleucine and N-carbamoyl-D-norleucine. May be a bifunctional enzyme involved in menaquinone biosynthesis and in an irreversible pathway for the conversion of D- to L-amino acids, thereby facilitating the survival and/or growth of the organism. The chain is o-succinylbenzoate synthase from Geobacillus kaustophilus.